Consider the following 268-residue polypeptide: Hydroxyethylthiazole kinase (268 aa).

Methionine 47 lines the substrate pocket. ATP-binding residues include lysine 123 and threonine 170. Alanine 196 contacts substrate.

This sequence belongs to the Thz kinase family. The cofactor is Mg(2+).

The catalysed reaction is 5-(2-hydroxyethyl)-4-methylthiazole + ATP = 4-methyl-5-(2-phosphooxyethyl)-thiazole + ADP + H(+). The protein operates within cofactor biosynthesis; thiamine diphosphate biosynthesis; 4-methyl-5-(2-phosphoethyl)-thiazole from 5-(2-hydroxyethyl)-4-methylthiazole: step 1/1. Functionally, catalyzes the phosphorylation of the hydroxyl group of 4-methyl-5-beta-hydroxyethylthiazole (THZ). This chain is Hydroxyethylthiazole kinase, found in Finegoldia magna (strain ATCC 29328 / DSM 20472 / WAL 2508) (Peptostreptococcus magnus).